We begin with the raw amino-acid sequence, 313 residues long: Small ribosomal subunit protein uS2 (313 aa).

Residues 281-301 are disordered; it reads AAPAAPAVEPAPEAAQEATAE.

Belongs to the universal ribosomal protein uS2 family.

This chain is Small ribosomal subunit protein uS2, found in Caulobacter sp. (strain K31).